A 131-amino-acid polypeptide reads, in one-letter code: Ribonuclease VapC4 (131 aa).

One can recognise a PINc domain in the interval 4-106; that stretch reads IVPDTNFLIY…IVATNDKELK (103 aa). Mg(2+) is bound by residues D7 and D102.

Belongs to the PINc/VapC protein family. It depends on Mg(2+) as a cofactor.

Its function is as follows. Toxic component of a type II toxin-antitoxin (TA) system. An RNase. Its cognate antitoxin is VapB4. This chain is Ribonuclease VapC4, found in Methanocaldococcus jannaschii (strain ATCC 43067 / DSM 2661 / JAL-1 / JCM 10045 / NBRC 100440) (Methanococcus jannaschii).